Reading from the N-terminus, the 139-residue chain is uncharacterized protein (139 aa).

Helical transmembrane passes span 38 to 60, 72 to 94, and 114 to 136; these read YFLHRMVVCLGVLLCAASLLYVF, FIILRSCVGCSVLLVVACLCAGS, and ITVVALLFGMGALVFNTVVLIVA.

It is found in the cell membrane. This is an uncharacterized protein from Treponema pallidum (strain Nichols).